Here is a 270-residue protein sequence, read N- to C-terminus: uncharacterized protein (270 aa).

Its function is as follows. Possibly involved in pGI2 replication mechanism. This is an uncharacterized protein from Bacillus thuringiensis.